We begin with the raw amino-acid sequence, 332 residues long: Autoinducer 2 import system permease protein LsrD (332 aa).

Helical transmembrane passes span 7–27 (YSWEIALAALLIFEILAFGLI), 45–65 (ICIGIVALPLTMVIVSGGMDI), 70–90 (TIGLCAITLGVLFQLGMPLPL), 91–111 (AIIITLLLGAICGLINAGLII), 118–138 (LVITLGTMYLFGGSALLLSGM), 162–182 (FLGIPMPLIFFLVCCLFFWLL), 216–236 (VYAMTGCASAIAAVLLVSYFG), 240–260 (SDLGASFLMPAITAVVLGGAN), 261–281 (IYGGSGSIMGSALAALLVGFL), and 288–308 (AGVPNQISSALSGALLIVVVV).

It belongs to the binding-protein-dependent transport system permease family. AraH/RbsC subfamily. In terms of assembly, the complex is composed of two ATP-binding proteins (LsrA), two transmembrane proteins (LsrC and LsrD) and a solute-binding protein (LsrB).

The protein resides in the cell inner membrane. Its function is as follows. Part of the ABC transporter complex LsrABCD involved in autoinducer 2 (AI-2) import. Probably responsible for the translocation of the substrate across the membrane. The protein is Autoinducer 2 import system permease protein LsrD (lsrD) of Salmonella paratyphi B (strain ATCC BAA-1250 / SPB7).